Reading from the N-terminus, the 148-residue chain is uncharacterized protein (148 aa).

Positions methionine 1 to arginine 17 are enriched in low complexity. 2 disordered regions span residues methionine 1 to proline 86 and arginine 122 to cysteine 148. A compositionally biased stretch (basic residues) spans arginine 38–proline 57. Positions glutamine 134–cysteine 148 are enriched in polar residues.

This sequence belongs to the Epstein-Barr virus BLLF2 family.

This is an uncharacterized protein from Homo sapiens (Human).